The sequence spans 56 residues: UPF0434 protein Ecaj_0131 (56 aa).

It belongs to the UPF0434 family.

This chain is UPF0434 protein Ecaj_0131, found in Ehrlichia canis (strain Jake).